A 494-amino-acid chain; its full sequence is Neuronal acetylcholine receptor subunit alpha-6 (494 aa).

The first 31 residues, 1-31, serve as a signal peptide directing secretion; that stretch reads MHPKRRLCWCLPASGAWAFMLTSLIADTTAC. The Extracellular portion of the chain corresponds to 32–240; it reads ESEERLFHKL…TYSFYIRRLP (209 aa). Asparagine 54 and asparagine 171 each carry an N-linked (GlcNAc...) asparagine glycan. An intrachain disulfide couples cysteine 158 to cysteine 172. Helical transmembrane passes span 241-265, 272-290, and 306-327; these read MFYT…FYLP, VTLC…LVIT, and YLLF…VLNI. Topologically, residues 328 to 468 are cytoplasmic; sequence HYRTPTTHTM…WKYVAMVIDR (141 aa). The tract at residues 364-390 is disordered; it reads KNISKKTKKGSAKTSGKSKHSKHKDNK. Residues 366–390 are compositionally biased toward basic residues; the sequence is ISKKTKKGSAKTSGKSKHSKHKDNK. The helical transmembrane segment at 469 to 489 threads the bilayer; it reads VFLWVFIILCVFGTAGLFIQP.

It belongs to the ligand-gated ion channel (TC 1.A.9) family. Acetylcholine receptor (TC 1.A.9.1) subfamily. Alpha-6/CHRNA6 sub-subfamily. Neuronal AChR is composed of two different types of subunits: alpha and non-alpha (beta). CHRNA6/alpha-6 subunit can be combined to CHRNB2/beta-2, CHRNA4/alpha-4 and CHRNB3/beta-3 to give rise to functional receptors. Heteropentamers containing CHRNB3 have an stoichiometry of (CHRNA6:CHRNB2)2:CHRNB3. Interacts with LYPD6.

It localises to the synaptic cell membrane. It catalyses the reaction K(+)(in) = K(+)(out). The catalysed reaction is Na(+)(in) = Na(+)(out). It carries out the reaction Ca(2+)(in) = Ca(2+)(out). With respect to regulation, activated by a myriad of ligands such as acetylcholine, cytisine and nicotine. CHRNA6 nAChR activity is inhibited by the antagonists alpha-conotoxin MII and PIA, a small disulfide-constrained peptides from cone snails. Its function is as follows. Component of neuronal acetylcholine receptors (nAChRs) that function as pentameric, ligand-gated cation channels with high calcium permeability among other activities. nAChRs are excitatory neurotrasnmitter receptors formed by a collection of nAChR subunits known to mediate synaptic transmission in the nervous system and the neuromuscular junction. Each nAchR subunit confers differential attributes to channel properties, including activation, deactivation and desensitization kinetics, pH sensitivity, cation permeability, and binding to allosteric modulators. CHRNA6 forms pentameric channels with CHRNB2 and CHRNA4 that exhibit high sensitivity to ACh and nicotine and are predominantly expressed in only a few brain areas, including dopaminergic neurons, norepirephrine neurons and cells of the visual system. nAChrs containing CHRNA6 subunits mediate endogenous cholinergic modulation of dopamine and gamma-aminobutyric acid (GABA) release in response to nicotine at nerve terminals. In terms of biological role, component of neuronal acetylcholine receptors (nAChRs) that function as pentameric, ligand-gated cation channels with high calcium permeability among other activities. nAChRs are excitatory neurotrasnmitter receptors formed by a collection of nAChR subunits known to mediate synaptic transmission in the nervous system and the neuromuscular junction. Each nAchR subunit confers differential attributes to channel properties, including activation, deactivation and desensitization kinetics, pH sensitivity, cation permeability, and binding to allosteric modulators. CHRNA6 forms pentameric channels with CHRNB2, CHRNB3 and CHRNA4 that exhibit high sensitivity to ACh and nicotine and are predominantly expressed in only a few brain areas, including dopaminergic neurons, norepirephrine neurons and cells of the visual system. nAChrs containing CHRNA6 subunits mediate endogenous cholinergic modulation of dopamine and gamma-aminobutyric acid (GABA) release in response to nicotine at nerve terminals. This chain is Neuronal acetylcholine receptor subunit alpha-6 (CHRNA6), found in Gallus gallus (Chicken).